The primary structure comprises 152 residues: Interleukin-3 (152 aa).

An N-terminal signal peptide occupies residues 1-19 (MSCLPVLLLLQLLVSPGLQ). N-linked (GlcNAc...) asparagine glycosylation is found at asparagine 34 and asparagine 89. A disulfide bond links cysteine 35 and cysteine 103.

This sequence belongs to the IL-3 family. In terms of assembly, monomer. As to expression, activated T-cells, mast cells, natural killer cells.

It localises to the secreted. Its function is as follows. Granulocyte/macrophage colony-stimulating factors are cytokines that act in hematopoiesis by controlling the production, differentiation, and function of 2 related white cell populations of the blood, the granulocytes and the monocytes-macrophages. In terms of biological role, this CSF induces granulocytes, macrophages, mast cells, stem cells, erythroid cells, eosinophils and megakaryocytes. The chain is Interleukin-3 (IL3) from Hylobates lar (Lar gibbon).